Consider the following 176-residue polypeptide: 3-hydroxydecanoyl-[acyl-carrier-protein] dehydratase (176 aa).

Histidine 75 is an active-site residue.

It belongs to the thioester dehydratase family. FabA subfamily. In terms of assembly, homodimer.

Its subcellular location is the cytoplasm. It carries out the reaction a (3R)-hydroxyacyl-[ACP] = a (2E)-enoyl-[ACP] + H2O. The enzyme catalyses (3R)-hydroxydecanoyl-[ACP] = (2E)-decenoyl-[ACP] + H2O. The catalysed reaction is (2E)-decenoyl-[ACP] = (3Z)-decenoyl-[ACP]. It participates in lipid metabolism; fatty acid biosynthesis. In terms of biological role, necessary for the introduction of cis unsaturation into fatty acids. Catalyzes the dehydration of (3R)-3-hydroxydecanoyl-ACP to E-(2)-decenoyl-ACP and then its isomerization to Z-(3)-decenoyl-ACP. Can catalyze the dehydratase reaction for beta-hydroxyacyl-ACPs with saturated chain lengths up to 16:0, being most active on intermediate chain length. The sequence is that of 3-hydroxydecanoyl-[acyl-carrier-protein] dehydratase from Haemophilus ducreyi (strain 35000HP / ATCC 700724).